A 926-amino-acid chain; its full sequence is Ubiquitin carboxyl-terminal hydrolase 4 (926 aa).

In terms of domain architecture, Rhodanese spans 205 to 328; that stretch reads SQMEILLIDI…WLKSNYGSQV (124 aa). Ser443 is modified (phosphoserine). The USP domain maps to 562–923; that stretch reads VGLENLGNSC…NAYVLFYHRV (362 aa). Cys571 functions as the Nucleophile in the catalytic mechanism. Residue His880 is the Proton acceptor of the active site.

The protein belongs to the peptidase C19 family. As to quaternary structure, interacts with BRO1, RFU1 and VPS32. Associates with the 26S proteasome.

The protein localises to the cytoplasm. It is found in the late endosome membrane. It catalyses the reaction Thiol-dependent hydrolysis of ester, thioester, amide, peptide and isopeptide bonds formed by the C-terminal Gly of ubiquitin (a 76-residue protein attached to proteins as an intracellular targeting signal).. RFU1 is an inhibitor of deubiquitination activity. Functionally, ubiquitin thioesterase that acts at the late endosome/prevacuolar compartment to recover ubiquitin from ubiquitinated membrane proteins en route to the vacuole. Also removes ubiquitin from soluble proteins targeted to proteasomes. Is essential to maintain a normal level of free ubiquitin. Involved in the ammonium-induced down-regulation of the GAP1 permease and the UME3 destruction in response to oxidative stress. Has a role in the RAD9 checkpoint response to TOP1 poisons. Required for promoting coordination of DNA replication and avoids DNA overreplication. In Saccharomyces cerevisiae (strain YJM789) (Baker's yeast), this protein is Ubiquitin carboxyl-terminal hydrolase 4 (DOA4).